Reading from the N-terminus, the 1004-residue chain is MGPLWFCCLPLALLPLLAAVEETLMDSTTATAELGWMVHPPSGWEEVSGYDENMNTIRTYQVCNVFESSQNNWLRTKYIRRRGAHRIHVEMKFSVRDCSSIPNVPGSCKETFNLYYYESDFDSATKTFPNWMENPWMKVDTIAADESFSQVDLGGRVMKINTEVRSFGPVSKNGFYLAFQDYGGCMSLIAVRVFYRKCPRVIQNGAVFQETLSGAESTSLVAARGTCISNAEEVDVPIKLYCNGDGEWLVPIGRCMCRPGYESVENGTVCRGCPSGTFKASQGDEGCVHCPINSRTTSEGATNCVCRNGYYRADADPVDMPCTTIPSAPQAVISSVNETSLMLEWTPPRDSGGREDLVYNIICKSCGSGRGACTRCGDNVQFAPRQLGLTEPRIYISDLLAHTQYTFEIQAVNGVTDQSPFSPQFASVNITTNQAAPSAVSIMHQVSRTVDSITLSWSQPDQPNGVILDYELQYYEKNLSELNSTAVKSPTNTVTVQNLKAGTIYVFQVRARTVAGYGRYSGKMYFQTMTEAEYQTSVQEKLPLIIGSSAAGLVFLIAVVVIIIVCNRRRGFERADSEYTDKLQHYTSGHSTYRGPPPGLGVRLFVMTPGMKIYIDPFTYEDPNEAVREFAKEIDISCVKIEQVIGAGEFGEVCSGHLKLPGKREIFVAIKTLKSGYTEKQRRDFLSEASIMGQFDHPNVIHLEGVVTKSSPVMIITEFMENGSLDSFLRQNDGQFTVIQLVGMLRGIAAGMKYLADMNYVHRDLAARNILVNSNLVCKVSDFGLSRFLEDDTSDPTYTSALGGKIPIRWTAPEAIQYRKFTSASDVWSYGIVMWEVMSYGERPYWDMTNQDVINAIEQDYRLPPPMDCPNALHQLMLDCWQKDRNHRPKFGQIVNTLDKMIRNPNSLKAMAPLSSGVNLPLLDRTIPDYTSFNTVDEWLDAIKMSQYKESFASAGFTTFDIVSQMTVEDILRVGVTLAGHQKKILNSIQVMRAQMNQIQSVEV.

The N-terminal stretch at 1 to 19 (MGPLWFCCLPLALLPLLAA) is a signal peptide. Residues 20 to 544 (VEETLMDSTT…QTSVQEKLPL (525 aa)) are Extracellular-facing. Residues 21 to 203 (EETLMDSTTA…FYRKCPRVIQ (183 aa)) enclose the Eph LBD domain. Intrachain disulfides connect Cys-63–Cys-185 and Cys-98–Cys-108. 5 N-linked (GlcNAc...) asparagine glycosylation sites follow: Asn-266, Asn-337, Asn-429, Asn-478, and Asn-483. Fibronectin type-III domains follow at residues 325-435 (IPSA…TNQA) and 436-531 (APSA…TMTE). The chain crosses the membrane as a helical span at residues 545–565 (IIGSSAAGLVFLIAVVVIIIV). The Cytoplasmic portion of the chain corresponds to 566–1004 (CNRRRGFERA…QMNQIQSVEV (439 aa)). Residues 639 to 902 (VKIEQVIGAG…QIVNTLDKMI (264 aa)) enclose the Protein kinase domain. ATP is bound by residues 645–653 (IGAGEFGEV) and Lys-671. The active-site Proton acceptor is the Asp-764. The 65-residue stretch at 931–995 (TSFNTVDEWL…LNSIQVMRAQ (65 aa)) folds into the SAM domain. The short motif at 1002–1004 (VEV) is the PDZ-binding element.

Belongs to the protein kinase superfamily. Tyr protein kinase family. Ephrin receptor subfamily. As to quaternary structure, heterotetramer upon binding of the ligand. The heterotetramer is composed of an ephrin dimer and a receptor dimer. Oligomerization is probably required to induce biological responses. Ligand binding induces cleavage by matrix metalloproteinases (MMPs) such as MMP7/MMP9, producing an EphB2/N-terminal fragment (NTF) and a C-terminal long fragment (EphB2-LF). EphB2-LF is further cleaved by MMPs, producing EphB2/CTF1 which is further cleaved by the PS1/gamma-secretase producing EphB2/CTF2. Wide tissue distribution throughout development and sustained expression in adult brain. The longer form (CEK5+) is specifically expressed in the central nervous system.

It localises to the cell membrane. It is found in the cell projection. Its subcellular location is the axon. The protein localises to the dendrite. It carries out the reaction L-tyrosyl-[protein] + ATP = O-phospho-L-tyrosyl-[protein] + ADP + H(+). Receptor tyrosine kinase which binds promiscuously transmembrane ephrin-B family ligands residing on adjacent cells, leading to contact-dependent bidirectional signaling into neighboring cells. The signaling pathway downstream of the receptor is referred to as forward signaling while the signaling pathway downstream of the ephrin ligand is referred to as reverse signaling. Functions in axon guidance during development. In addition to axon guidance, also regulates dendritic spines development and maturation and stimulates the formation of excitatory synapses. This chain is Ephrin type-B receptor 2 (EPHB2), found in Gallus gallus (Chicken).